The sequence spans 1073 residues: Probable cellulose synthase A catalytic subunit 2 [UDP-forming] (1073 aa).

Over 1–270 (MDGAKSGKQC…SSSRINPYRM (270 aa)) the chain is Cytoplasmic. Residues Cys-13, Cys-16, Cys-32, Cys-35, Cys-40, Cys-43, Cys-55, and Cys-58 each contribute to the Zn(2+) site. The segment at 13–59 (CQICGDGVGTAADGELFTACDVCGFPVCRPCYEYERKDGSQACPQCK) adopts an RING-type; degenerate zinc-finger fold. The interval 66–98 (KGSPPILGDESDDVDADDASDVNYPTSGNQDHK) is disordered. Residues 74–85 (DESDDVDADDAS) show a composition bias toward acidic residues. A helical membrane pass occupies residues 271–291 (VIVLRLIVLCIFLHYRITNPV). Residues 292–293 (RN) lie on the Extracellular side of the membrane. Residues 294–314 (AYPLWLLSVICEIWFALSWIL) traverse the membrane as a helical segment. The Cytoplasmic segment spans residues 315–856 (DQFPKWSPIN…INTTIYPLTS (542 aa)). Ser-353, Lys-359, Glu-360, and Asp-389 together coordinate UDP-alpha-D-glucose. Asp-389 is an active-site residue. Residues 443-470 (VKDRRAMKREYEEFKVRVNALVAKAQKV) are a coiled coil. Lys-530 provides a ligand contact to UDP-alpha-D-glucose. Residues Lys-531 and Asp-555 each contribute to the Mn(2+) site. Residues 655-676 (GGRKKTKKSKEKSTEKKKSHKH) are disordered. Asp-773 is a catalytic residue. A helical membrane pass occupies residues 857–877 (IPLLLYCILPAICLLTGKFII). Topologically, residues 878–882 (PEISN) are extracellular. The chain crosses the membrane as a helical span at residues 883 to 903 (FASIWFISLFLSIFATGILEM). Over 904–918 (RWSGVGIDEWWRNEQ) the chain is Cytoplasmic. Residues 919–939 (FWVIGGISAHLFAVFQGLLKV) form a helical membrane-spanning segment. At 940–969 (LAGIDTSFTVTSKASDEEGDFAELYMFKWT) the chain is on the extracellular side. The helical transmembrane segment at 970 to 990 (TLLIPPTTILIINLVGVVAGI) threads the bilayer. Residues 991–1001 (SYAINSGYQSW) lie on the Cytoplasmic side of the membrane. A helical transmembrane segment spans residues 1002–1022 (GPLFGKLFFAFWVIVHLYPFL). Residues 1023 to 1031 (KGLMGRQNR) are Extracellular-facing. The chain crosses the membrane as a helical span at residues 1032–1052 (TPTIVVVWAILLASIFSLLWV). Topologically, residues 1053–1073 (RIDPFTTRVTGPDTQKCGINC) are cytoplasmic.

Belongs to the glycosyltransferase 2 family. Plant cellulose synthase subfamily. The cofactor is Mn(2+). Zn(2+) is required as a cofactor.

It is found in the cell membrane. It catalyses the reaction [(1-&gt;4)-beta-D-glucosyl](n) + UDP-alpha-D-glucose = [(1-&gt;4)-beta-D-glucosyl](n+1) + UDP + H(+). Its pathway is glycan metabolism; plant cellulose biosynthesis. Functionally, probable catalytic subunit of cellulose synthase terminal complexes ('rosettes'), required for beta-1,4-glucan microfibril crystallization, a major mechanism of the cell wall formation. This is Probable cellulose synthase A catalytic subunit 2 [UDP-forming] (CESA2) from Oryza sativa subsp. japonica (Rice).